We begin with the raw amino-acid sequence, 550 residues long: Acetyl-coenzyme A transporter 1 (550 aa).

Topologically, residues 1–74 (MSPTISHKDN…KRSYRAELSS (74 aa)) are cytoplasmic. Ser-42 carries the post-translational modification Phosphoserine. A helical transmembrane segment spans residues 75–95 (ILLLLFLYVLQGIPLGLAGSI). The Extracellular segment spans residues 96–113 (PLILQSKNVSYTDQAFFS). Asn-103 carries an N-linked (GlcNAc...) asparagine glycan. Residues 114 to 134 (FVFWPFSLKLLWAPLVDAVYF) traverse the membrane as a helical segment. The Cytoplasmic portion of the chain corresponds to 135–141 (KNFGRRK). A helical transmembrane segment spans residues 142-162 (SWLVPTQYILGIFMIYLSTQV). Over 163–256 (DRLLGNIDGR…FQPQPRGIVT (94 aa)) the chain is Extracellular. A helical membrane pass occupies residues 257-277 (LSDFLFFWGTVFLITTTLVAL). Residues 278 to 300 (LKKETREASVVKEETQGITDTYK) lie on the Cytoplasmic side of the membrane. A helical membrane pass occupies residues 301–321 (LLFSIIKMPAVLAFCLLILTS). The Extracellular segment spans residues 322-344 (KIGFSAADAVTGLKLVEEGVPKE). A helical transmembrane segment spans residues 345 to 365 (HLALLAVPMVPLQIILPLLIS). Residues 366-375 (KYTAGPQPLN) lie on the Cytoplasmic side of the membrane. Residues 376-396 (IFYKAMPYRLLLGLEYALLVW) form a helical membrane-spanning segment. The Extracellular portion of the chain corresponds to 397–405 (WTPKVEHQG). The helical transmembrane segment at 406-426 (GFPIYYYIIVLLSYALHQVTL) threads the bilayer. The Cytoplasmic portion of the chain corresponds to 427 to 509 (YSMYVSIMAF…LGGSCVTALD (83 aa)). The chain crosses the membrane as a helical span at residues 510–530 (GYYVESIVCVLIGFGWWFFLG). At 531 to 550 (PKFKKLQDEGPSSWKCKRTN) the chain is on the extracellular side.

This sequence belongs to the SLC33A transporter family. In terms of assembly, homodimerizes. Expressed in brain at all developmental stages. Detected in hippocampus, hypothalamus, cerebellum, cortex, olfactory bulb, and the ventral and dorsal anterior olfactory nucleus.

The protein localises to the endoplasmic reticulum membrane. It carries out the reaction acetyl-CoA(in) = acetyl-CoA(out). Its function is as follows. Acetyl-CoA transporter that mediates active acetyl-CoA import through the endoplasmic reticulum (ER) membrane into the ER lumen where specific ER-based acetyl-CoA:lysine acetyltransferases are responsible for the acetylation of ER-based protein substrates, such as BACE1. Necessary for O-acetylation of gangliosides. The protein is Acetyl-coenzyme A transporter 1 (Slc33a1) of Rattus norvegicus (Rat).